Here is a 316-residue protein sequence, read N- to C-terminus: Adenine deaminase (316 aa).

3 residues coordinate Zn(2+): His14, His16, and His194. Glu197 functions as the Proton donor in the catalytic mechanism. Position 275 (Asp275) interacts with Zn(2+). A substrate-binding site is contributed by Asp276.

Belongs to the metallo-dependent hydrolases superfamily. Adenosine and AMP deaminases family. Adenine deaminase type 2 subfamily. It depends on Zn(2+) as a cofactor.

The enzyme catalyses adenine + H2O + H(+) = hypoxanthine + NH4(+). Its function is as follows. Catalyzes the hydrolytic deamination of adenine to hypoxanthine. Plays an important role in the purine salvage pathway and in nitrogen catabolism. The polypeptide is Adenine deaminase (Pseudomonas entomophila (strain L48)).